A 550-amino-acid polypeptide reads, in one-letter code: Glucose-6-phosphate isomerase (550 aa).

The Proton donor role is filled by Glu-356. Residues His-387 and Lys-515 contribute to the active site.

It belongs to the GPI family.

It is found in the cytoplasm. The enzyme catalyses alpha-D-glucose 6-phosphate = beta-D-fructose 6-phosphate. It participates in carbohydrate biosynthesis; gluconeogenesis. The protein operates within carbohydrate degradation; glycolysis; D-glyceraldehyde 3-phosphate and glycerone phosphate from D-glucose: step 2/4. Functionally, catalyzes the reversible isomerization of glucose-6-phosphate to fructose-6-phosphate. This is Glucose-6-phosphate isomerase from Vibrio atlanticus (strain LGP32) (Vibrio splendidus (strain Mel32)).